Here is a 228-residue protein sequence, read N- to C-terminus: ATP-dependent dethiobiotin synthetase BioD (228 aa).

Position 12 to 17 (12 to 17) interacts with ATP; that stretch reads EIGKTT. T16 is a Mg(2+) binding site. The active site involves K37. S41 provides a ligand contact to substrate. Residues D54, 116 to 119, and 205 to 207 contribute to the ATP site; these read EGAG and PRL. Positions 54 and 116 each coordinate Mg(2+).

It belongs to the dethiobiotin synthetase family. In terms of assembly, homodimer. Mg(2+) serves as cofactor.

It is found in the cytoplasm. It carries out the reaction (7R,8S)-7,8-diammoniononanoate + CO2 + ATP = (4R,5S)-dethiobiotin + ADP + phosphate + 3 H(+). It participates in cofactor biosynthesis; biotin biosynthesis; biotin from 7,8-diaminononanoate: step 1/2. Functionally, catalyzes a mechanistically unusual reaction, the ATP-dependent insertion of CO2 between the N7 and N8 nitrogen atoms of 7,8-diaminopelargonic acid (DAPA, also called 7,8-diammoniononanoate) to form a ureido ring. In Pseudomonas aeruginosa (strain UCBPP-PA14), this protein is ATP-dependent dethiobiotin synthetase BioD.